Reading from the N-terminus, the 504-residue chain is ATP synthase subunit alpha (504 aa).

An ATP-binding site is contributed by 170–177 (GDRQTGKT).

Belongs to the ATPase alpha/beta chains family. In terms of assembly, F-type ATPases have 2 components, CF(1) - the catalytic core - and CF(0) - the membrane proton channel. CF(1) has five subunits: alpha(3), beta(3), gamma(1), delta(1), epsilon(1). CF(0) has four main subunits: a, b, b' and c.

Its subcellular location is the cellular thylakoid membrane. The catalysed reaction is ATP + H2O + 4 H(+)(in) = ADP + phosphate + 5 H(+)(out). In terms of biological role, produces ATP from ADP in the presence of a proton gradient across the membrane. The alpha chain is a regulatory subunit. This Prochlorococcus marinus (strain MIT 9211) protein is ATP synthase subunit alpha.